A 395-amino-acid chain; its full sequence is Probable eukaryotic translation initiation factor 5 (395 aa).

Residue 28 to 35 participates in GTP binding; the sequence is GKGNGIKT. Disordered regions lie at residues 146 to 171 and 374 to 395; these read PPAK…AEDE and LAEA…DDDE. The segment covering 147-157 has biased composition (basic residues); that stretch reads PAKKKSHKHKR. Acidic residues-rich tracts occupy residues 161–170 and 377–395; these read VAEEEDGAED and ASDE…DDDE. The W2 domain occupies 228-384; sequence EEAESSRYDQ…AEASDESESE (157 aa).

The protein belongs to the eIF-2-beta/eIF-5 family. Monomer.

Its function is as follows. Catalyzes the hydrolysis of GTP bound to the 40S ribosomal initiation complex (40S.mRNA.Met-tRNA[F].eIF-2.GTP) with the subsequent joining of a 60S ribosomal subunit resulting in the release of eIF-2 and the guanine nucleotide. The subsequent joining of a 60S ribosomal subunit results in the formation of a functional 80S initiation complex (80S.mRNA.Met-tRNA[F]). The chain is Probable eukaryotic translation initiation factor 5 (tif5) from Schizosaccharomyces pombe (strain 972 / ATCC 24843) (Fission yeast).